Here is a 166-residue protein sequence, read N- to C-terminus: Endoribonuclease YbeY (166 aa).

Zn(2+) contacts are provided by H132, H136, and H142.

Belongs to the endoribonuclease YbeY family. It depends on Zn(2+) as a cofactor.

Its subcellular location is the cytoplasm. Functionally, single strand-specific metallo-endoribonuclease involved in late-stage 70S ribosome quality control and in maturation of the 3' terminus of the 16S rRNA. The chain is Endoribonuclease YbeY from Clostridium botulinum (strain Langeland / NCTC 10281 / Type F).